The primary structure comprises 80 residues: Large ribosomal subunit protein uL24 (80 aa).

This sequence belongs to the universal ribosomal protein uL24 family. In terms of assembly, part of the 50S ribosomal subunit.

Functionally, one of two assembly initiator proteins, it binds directly to the 5'-end of the 23S rRNA, where it nucleates assembly of the 50S subunit. In terms of biological role, one of the proteins that surrounds the polypeptide exit tunnel on the outside of the subunit. The chain is Large ribosomal subunit protein uL24 from Prosthecochloris aestuarii (strain DSM 271 / SK 413).